The following is a 358-amino-acid chain: Probable D-xylulose reductase A (358 aa).

Residues Cys47, His72, and Glu73 each coordinate Zn(2+). 182–187 (GAGPVG) provides a ligand contact to NAD(+).

Belongs to the zinc-containing alcohol dehydrogenase family. Zn(2+) is required as a cofactor.

It catalyses the reaction xylitol + NAD(+) = D-xylulose + NADH + H(+). Its pathway is carbohydrate degradation; L-arabinose degradation via L-arabinitol; D-xylulose 5-phosphate from L-arabinose (fungal route): step 4/5. In terms of biological role, xylitol dehydrogenase which catalyzes the conversion of xylitol to D-xylulose. Xylose is a major component of hemicelluloses such as xylan. Most fungi utilize D-xylose via three enzymatic reactions, xylose reductase (XR), xylitol dehydrogenase (XDH), and xylulokinase, to form xylulose 5-phosphate, which enters pentose phosphate pathway. The polypeptide is Probable D-xylulose reductase A (xdhA) (Neosartorya fischeri (strain ATCC 1020 / DSM 3700 / CBS 544.65 / FGSC A1164 / JCM 1740 / NRRL 181 / WB 181) (Aspergillus fischerianus)).